The primary structure comprises 338 residues: Aspartate--ammonia ligase (338 aa).

Belongs to the class-II aminoacyl-tRNA synthetase family. AsnA subfamily.

The protein localises to the cytoplasm. It carries out the reaction L-aspartate + NH4(+) + ATP = L-asparagine + AMP + diphosphate + H(+). It functions in the pathway amino-acid biosynthesis; L-asparagine biosynthesis; L-asparagine from L-aspartate (ammonia route): step 1/1. The sequence is that of Aspartate--ammonia ligase from Lactobacillus delbrueckii subsp. bulgaricus (strain ATCC BAA-365 / Lb-18).